The primary structure comprises 62 residues: Large ribosomal subunit protein uL30 (62 aa).

Belongs to the universal ribosomal protein uL30 family. In terms of assembly, part of the 50S ribosomal subunit.

The sequence is that of Large ribosomal subunit protein uL30 from Halalkalibacterium halodurans (strain ATCC BAA-125 / DSM 18197 / FERM 7344 / JCM 9153 / C-125) (Bacillus halodurans).